Here is a 154-residue protein sequence, read N- to C-terminus: PTTG1IP family member 2 (154 aa).

The first 26 residues, 1 to 26 (MCWLRAWGQILLPVFLSLFLIQLLIS), serve as a signal peptide directing secretion. Topologically, residues 27 to 97 (FSENGFIHSP…SIYWLNCKVD (71 aa)) are extracellular. Residues 98-118 (MFGIMMLLLIAVLITGFVWYC) traverse the membrane as a helical segment. Residues 119–154 (CAYHFYLQDLNRNRVYFYGRRETVPIHDRSATVYDE) lie on the Cytoplasmic side of the membrane.

It localises to the membrane. In Homo sapiens (Human), this protein is PTTG1IP family member 2.